A 142-amino-acid chain; its full sequence is Hemoglobin subunit alpha (142 aa).

Residues 2-142 (VLSPADKTNV…VSTVLTSKYR (141 aa)) enclose the Globin domain. Ser4 is modified (phosphoserine). An N6-succinyllysine modification is found at Lys8. A Phosphothreonine modification is found at Thr9. An N6-succinyllysine modification is found at Lys12. Residue Lys17 is modified to N6-acetyllysine; alternate. Position 17 is an N6-succinyllysine; alternate (Lys17). A Phosphotyrosine modification is found at Tyr25. At Ser36 the chain carries Phosphoserine. Position 41 is an N6-succinyllysine (Lys41). Phosphoserine is present on Ser50. Residue His59 coordinates O2. His88 serves as a coordination point for heme b. Ser103 is modified (phosphoserine). Thr109 is modified (phosphothreonine). Ser125 is subject to Phosphoserine. Phosphothreonine is present on residues Thr135 and Thr138. A Phosphoserine modification is found at Ser139.

The protein belongs to the globin family. In terms of assembly, heterotetramer of two alpha chains and two beta chains. Red blood cells.

Its function is as follows. Involved in oxygen transport from the lung to the various peripheral tissues. Hemopressin acts as an antagonist peptide of the cannabinoid receptor CNR1. Hemopressin-binding efficiently blocks cannabinoid receptor CNR1 and subsequent signaling. This is Hemoglobin subunit alpha (HBA) from Ailuropoda melanoleuca (Giant panda).